The chain runs to 459 residues: UDP-N-acetylmuramate--L-alanine ligase (459 aa).

ATP is bound at residue 113-119 (GSHGKTT).

This sequence belongs to the MurCDEF family.

The protein resides in the cytoplasm. The enzyme catalyses UDP-N-acetyl-alpha-D-muramate + L-alanine + ATP = UDP-N-acetyl-alpha-D-muramoyl-L-alanine + ADP + phosphate + H(+). Its pathway is cell wall biogenesis; peptidoglycan biosynthesis. Its function is as follows. Cell wall formation. The protein is UDP-N-acetylmuramate--L-alanine ligase of Persephonella marina (strain DSM 14350 / EX-H1).